Reading from the N-terminus, the 94-residue chain is Large ribosomal subunit protein bL27 (94 aa).

Positions 1 to 9 are excised as a propeptide; the sequence is MLELNLQLF. The disordered stretch occupies residues 12–33; it reads KKGGGSTSNGRDSQAKRLGAKA.

The protein belongs to the bacterial ribosomal protein bL27 family. In terms of processing, the N-terminus is cleaved by ribosomal processing cysteine protease Prp.

The polypeptide is Large ribosomal subunit protein bL27 (Lactococcus lactis subsp. cremoris (strain MG1363)).